Reading from the N-terminus, the 451-residue chain is D-inositol 3-phosphate glycosyltransferase (451 aa).

His21 serves as a coordination point for 1D-myo-inositol 3-phosphate. Residues 27-28 and Gly35 each bind UDP-N-acetyl-alpha-D-glucosamine; that span reads QP. Residues 32 to 37, Lys90, Tyr123, Thr147, and Arg167 each bind 1D-myo-inositol 3-phosphate; that span reads DAGGMN. UDP-N-acetyl-alpha-D-glucosamine-binding residues include Arg241, Lys246, and Gln305. Mg(2+) contacts are provided by Tyr314, Arg315, and Ala317. UDP-N-acetyl-alpha-D-glucosamine is bound by residues Glu327 and Glu335. Thr341 is a binding site for Mg(2+).

This sequence belongs to the glycosyltransferase group 1 family. MshA subfamily. Homodimer.

It catalyses the reaction 1D-myo-inositol 3-phosphate + UDP-N-acetyl-alpha-D-glucosamine = 1D-myo-inositol 2-acetamido-2-deoxy-alpha-D-glucopyranoside 3-phosphate + UDP + H(+). Functionally, catalyzes the transfer of a N-acetyl-glucosamine moiety to 1D-myo-inositol 3-phosphate to produce 1D-myo-inositol 2-acetamido-2-deoxy-glucopyranoside 3-phosphate in the mycothiol biosynthesis pathway. In Nocardia farcinica (strain IFM 10152), this protein is D-inositol 3-phosphate glycosyltransferase.